Consider the following 1029-residue polypeptide: Serine/threonine-protein kinase KSP1 (1029 aa).

Residues 18 to 351 (YQKIEDISEG…TELQNLSEYT (334 aa)) form the Protein kinase domain. Residues 27–35 (GSYGYVSLA) and K47 each bind ATP. The span at 56 to 79 (GQYDGPQDDENDCDSSDCDDDEDT) shows a compositional bias: acidic residues. The tract at residues 56-105 (GQYDGPQDDENDCDSSDCDDDEDTKVDTDRHENENGNASSNNGSSREKKH) is disordered. Residues 80–89 (KVDTDRHENE) show a composition bias toward basic and acidic residues. Over residues 90 to 99 (NGNASSNNGS) the composition is skewed to low complexity. The Proton acceptor role is filled by D207. A disordered region spans residues 377 to 397 (VPPSSAPVSLPTPISSSNKQH). Residues S416 and S419 each carry the phosphoserine modification. Phosphothreonine is present on residues T501, T504, and T526. Position 529 is a phosphoserine (S529). A disordered region spans residues 532–570 (HRYMEGFSNNNNKQYRQNRNYNNNNNNSNNNHGSNYNNF). Low complexity predominate over residues 538–570 (FSNNNNKQYRQNRNYNNNNNNSNNNHGSNYNNF). S646 carries the phosphoserine modification. The disordered stretch occupies residues 732 to 824 (STNHNNNGNN…SDSKELEQER (93 aa)). The span at 734 to 743 (NHNNNGNNNH) shows a compositional bias: low complexity. Residues 744-754 (IDTNSTTNQYH) show a composition bias toward polar residues. Positions 813–824 (HSSDSKELEQER) are enriched in basic and acidic residues. Residues S845 and S884 each carry the phosphoserine modification. The segment at 949-978 (EYEGESDKMAHGKMEGGDNESSSTSPDERQ) is disordered. Positions 953-964 (ESDKMAHGKMEG) are enriched in basic and acidic residues. Position 1005 is a phosphothreonine (T1005). Position 1014 is a phosphoserine (S1014).

It belongs to the protein kinase superfamily. Ser/Thr protein kinase family. CK2 subfamily. In terms of processing, phosphorylated by PKA in a TORC1-dependent manner. Phosphorylation at PKA consensus sites RRxS/T decreases upon rapamycin treatment.

It localises to the nucleus. The catalysed reaction is L-seryl-[protein] + ATP = O-phospho-L-seryl-[protein] + ADP + H(+). It catalyses the reaction L-threonyl-[protein] + ATP = O-phospho-L-threonyl-[protein] + ADP + H(+). Functionally, may act on PRP20. The sequence is that of Serine/threonine-protein kinase KSP1 (KSP1) from Saccharomyces cerevisiae (strain ATCC 204508 / S288c) (Baker's yeast).